Consider the following 34-residue polypeptide: Photosystem II reaction center protein M (34 aa).

A helical membrane pass occupies residues 5–25 (ILAFIATALFVLIPTAFLIIL).

Belongs to the PsbM family. As to quaternary structure, PSII is composed of 1 copy each of membrane proteins PsbA, PsbB, PsbC, PsbD, PsbE, PsbF, PsbH, PsbI, PsbJ, PsbK, PsbL, PsbM, PsbT, PsbX, PsbY, PsbZ, Psb30/Ycf12, at least 3 peripheral proteins of the oxygen-evolving complex and a large number of cofactors. It forms dimeric complexes.

It is found in the plastid. The protein resides in the chloroplast thylakoid membrane. Its function is as follows. One of the components of the core complex of photosystem II (PSII). PSII is a light-driven water:plastoquinone oxidoreductase that uses light energy to abstract electrons from H(2)O, generating O(2) and a proton gradient subsequently used for ATP formation. It consists of a core antenna complex that captures photons, and an electron transfer chain that converts photonic excitation into a charge separation. This subunit is found at the monomer-monomer interface. This Zygnema circumcarinatum (Green alga) protein is Photosystem II reaction center protein M.